Consider the following 755-residue polypeptide: MLAKLRQRLAFLTRTNGTIDWGRGIRTFCGMAVPYLGGMALGNPQLGLGVGLASQLILLADMGGLYSVRLKTIFGAWVGAAIAMAVGTIVPDGWGLGLAITGFVLFASGYLAVYGEQGAMVGIVTTFAFLLGAQNVSTDSFEFTSLAIGGMWSLILAIFIWPFRPNQPLRQMVANNYSILGNYLRAMAAANFSPDDPQAQQLVVKLRQNLLKSRQTLVASQRGLWGQSKLRELLLVLIEHTERLNKCLMLLNEIVNFHNLPQLQTVEILMEDAFNALGEVCLDLGQMVLGKRRIPNTNRLQLLVQALQQQKKLQRQALTEDFNDYNSLTTVTQLVNHLENLIKQLEQTIQTAELLQNPQLFSDNNSNDQGKLNKVRLMPWWDPLGSNFHLNSPLLRHGLRMALGGMVGATIAHLTQIPYGFWIVITLIFVLKPDFSLTFQRLSNRLLGTFLGVLVMSIALKLIQDPQLLSWLGILAIAMGMALLRFHYSVAVFFITAFALILKAIDPSVPTEYALLSRLVCTLIGSAIALGLAFSFLRQSENLRFTQASVRMLTNLEQYFQQLIPALLGKESINKKEAERVRNETRLAATAMQIALDRLLSDPSTPLEKQEPALTMTNYLARLSRGFRVLISHLENSSGSNPPPPIKLFTEQVQQSLENLRFSLEHQSSPAALPPMATTIKEIREYHQSYQAQRITEINQKQDFTPTRRYLDDFNLVVEECQQIYQRLETIHSAIARFTDSPQLANGIKLKSQPS.

9 consecutive transmembrane segments (helical) span residues 46–66 (LGLGVGLASQLILLADMGGLY), 70–90 (LKTIFGAWVGAAIAMAVGTIV), 93–113 (GWGLGLAITGFVLFASGYLAV), 118–138 (GAMVGIVTTFAFLLGAQNVST), 143–163 (FTSLAIGGMWSLILAIFIWPF), 411–431 (IAHLTQIPYGFWIVITLIFVL), 446–466 (LLGTFLGVLVMSIALKLIQDP), 482–502 (ALLRFHYSVAVFFITAFALIL), and 514–534 (ALLSRLVCTLIGSAIALGLAF).

The protein belongs to the YccS/YhfK family.

The protein localises to the cell membrane. This is an uncharacterized protein from Synechocystis sp. (strain ATCC 27184 / PCC 6803 / Kazusa).